The primary structure comprises 98 residues: NADH-ubiquinone oxidoreductase chain 4L (98 aa).

A run of 3 helical transmembrane segments spans residues 1–21 (MTPT…GLTF), 26–46 (LLSA…SMAL), and 59–79 (APML…ALLV).

It belongs to the complex I subunit 4L family. Core subunit of respiratory chain NADH dehydrogenase (Complex I) which is composed of 45 different subunits.

It localises to the mitochondrion inner membrane. It catalyses the reaction a ubiquinone + NADH + 5 H(+)(in) = a ubiquinol + NAD(+) + 4 H(+)(out). Core subunit of the mitochondrial membrane respiratory chain NADH dehydrogenase (Complex I) which catalyzes electron transfer from NADH through the respiratory chain, using ubiquinone as an electron acceptor. Part of the enzyme membrane arm which is embedded in the lipid bilayer and involved in proton translocation. The sequence is that of NADH-ubiquinone oxidoreductase chain 4L (mt-nd4l) from Danio rerio (Zebrafish).